Reading from the N-terminus, the 555-residue chain is L-ascorbate oxidase homolog (555 aa).

Residues 1–23 (MRGVKLLAACLYLAAAATVVVHA) form the signal peptide. 2 consecutive Plastocyanin-like domains span residues 25–145 (DPYF…LRVN) and 158–301 (EDDY…RYEG). N-linked (GlcNAc...) asparagine glycans are attached at residues asparagine 33, asparagine 61, and asparagine 110. Residues cysteine 103 and cysteine 539 are joined by a disulfide bond. Residues asparagine 330, asparagine 350, and asparagine 422 are each glycosylated (N-linked (GlcNAc...) asparagine). The region spanning 345–524 (HYGKINITRT…LYASVLSPEK (180 aa)) is the Plastocyanin-like 3 domain.

It belongs to the multicopper oxidase family. Maximal expression in early binucleate microspores; declines considerably in mature trinucleate pollen.

It localises to the secreted. Functionally, probable oxidase that may be involved in pollen tube growth. This Brassica napus (Rape) protein is L-ascorbate oxidase homolog (Bp10).